Reading from the N-terminus, the 671-residue chain is Putative protein kinase C delta type homolog (671 aa).

The disordered stretch occupies residues 1–136 (MMFTRAQVRK…ITNRRGAIKH (136 aa)). Positions 14-27 (SNSSSQRPRSSGGS) are enriched in low complexity. Residues 57–101 (ARRDQYRDRDHYGKHSFELPRQHSKEEAYHRDRESSAGGVDRGER) show a composition bias toward basic and acidic residues. A compositionally biased stretch (gly residues) spans 102-116 (SGIGGNGGGVTGGGV). Phorbol-ester/DAG-type zinc fingers lie at residues 144 to 194 (GHRF…LGKC) and 216 to 266 (PHRF…ANLC). In terms of domain architecture, Protein kinase spans 343–601 (FHFLAVLGKG…AGDIADHIFF (259 aa)). Residues 349–357 (LGKGSFGKV) and lysine 372 each bind ATP. Aspartate 467 acts as the Proton acceptor in catalysis. One can recognise an AGC-kinase C-terminal domain in the interval 602 to 671 (RPIDWGLLEK…TYTNPHITLD (70 aa)).

It belongs to the protein kinase superfamily. AGC Ser/Thr protein kinase family. PKC subfamily.

It catalyses the reaction L-seryl-[protein] + ATP = O-phospho-L-seryl-[protein] + ADP + H(+). The enzyme catalyses L-threonyl-[protein] + ATP = O-phospho-L-threonyl-[protein] + ADP + H(+). The chain is Putative protein kinase C delta type homolog from Drosophila melanogaster (Fruit fly).